A 153-amino-acid chain; its full sequence is UPF0768 protein PB2B2.18 (153 aa).

The protein belongs to the UPF0768 family.

In Schizosaccharomyces pombe (strain 972 / ATCC 24843) (Fission yeast), this protein is UPF0768 protein PB2B2.18.